The sequence spans 226 residues: 2-dehydro-3-deoxy-phosphogluconate aldolase (226 aa).

The active-site Proton acceptor is the glutamate 57. The pyruvate site is built by arginine 61, threonine 85, and lysine 145. The active-site Schiff-base intermediate with substrate is the lysine 145.

Belongs to the KHG/KDPG aldolase family. Homotrimer.

The enzyme catalyses 2-dehydro-3-deoxy-6-phospho-D-gluconate = D-glyceraldehyde 3-phosphate + pyruvate. Its pathway is carbohydrate acid metabolism; 2-dehydro-3-deoxy-D-gluconate degradation; D-glyceraldehyde 3-phosphate and pyruvate from 2-dehydro-3-deoxy-D-gluconate: step 2/2. Its function is as follows. Involved in the degradation of glucose via the Entner-Doudoroff pathway. Catalyzes the reversible, stereospecific retro-aldol cleavage of 2-keto-3-deoxy-6-phosphogluconate (KDPG) to pyruvate and D-glyceraldehyde-3-phosphate. This Pseudomonas putida (Arthrobacter siderocapsulatus) protein is 2-dehydro-3-deoxy-phosphogluconate aldolase.